A 171-amino-acid chain; its full sequence is uncharacterized protein (171 aa).

This sequence belongs to the mimivirus R24/R907 family.

This is an uncharacterized protein from Acanthamoeba polyphaga (Amoeba).